A 434-amino-acid polypeptide reads, in one-letter code: Glutamate-1-semialdehyde 2,1-aminomutase (434 aa).

Position 274 is an N6-(pyridoxal phosphate)lysine (K274).

Belongs to the class-III pyridoxal-phosphate-dependent aminotransferase family. HemL subfamily. Homodimer. Pyridoxal 5'-phosphate is required as a cofactor.

It localises to the cytoplasm. It catalyses the reaction (S)-4-amino-5-oxopentanoate = 5-aminolevulinate. It participates in porphyrin-containing compound metabolism; protoporphyrin-IX biosynthesis; 5-aminolevulinate from L-glutamyl-tRNA(Glu): step 2/2. This chain is Glutamate-1-semialdehyde 2,1-aminomutase, found in Acidovorax sp. (strain JS42).